Reading from the N-terminus, the 440-residue chain is Thymidine phosphorylase (440 aa).

It belongs to the thymidine/pyrimidine-nucleoside phosphorylase family. As to quaternary structure, homodimer.

It catalyses the reaction thymidine + phosphate = 2-deoxy-alpha-D-ribose 1-phosphate + thymine. The protein operates within pyrimidine metabolism; dTMP biosynthesis via salvage pathway; dTMP from thymine: step 1/2. In terms of biological role, the enzymes which catalyze the reversible phosphorolysis of pyrimidine nucleosides are involved in the degradation of these compounds and in their utilization as carbon and energy sources, or in the rescue of pyrimidine bases for nucleotide synthesis. The chain is Thymidine phosphorylase from Escherichia coli O139:H28 (strain E24377A / ETEC).